We begin with the raw amino-acid sequence, 372 residues long: PqqA peptide cyclase (372 aa).

Residues 4–220 enclose the Radical SAM core domain; it reads APPPLSVLLE…ETARRQLGDR (217 aa). [4Fe-4S] cluster is bound by residues Cys-18, Cys-22, and Cys-25.

This sequence belongs to the radical SAM superfamily. PqqE family. In terms of assembly, interacts with PqqD. The interaction is necessary for activity of PqqE. The cofactor is [4Fe-4S] cluster.

The catalysed reaction is [PQQ precursor protein] + S-adenosyl-L-methionine = E-Y cross-linked-[PQQ precursor protein] + 5'-deoxyadenosine + L-methionine + H(+). It functions in the pathway cofactor biosynthesis; pyrroloquinoline quinone biosynthesis. Its function is as follows. Catalyzes the cross-linking of a glutamate residue and a tyrosine residue in the PqqA protein as part of the biosynthesis of pyrroloquinoline quinone (PQQ). The protein is PqqA peptide cyclase of Xanthomonas axonopodis pv. citri (strain 306).